Reading from the N-terminus, the 598-residue chain is Elongation factor 4 (598 aa).

In terms of domain architecture, tr-type G spans 5–187 (ANIRNFSIIA…ALVEFIPAPT (183 aa)). Residues 17 to 22 (DHGKST) and 134 to 137 (NKID) contribute to the GTP site.

Belongs to the TRAFAC class translation factor GTPase superfamily. Classic translation factor GTPase family. LepA subfamily.

It localises to the cell inner membrane. It catalyses the reaction GTP + H2O = GDP + phosphate + H(+). Functionally, required for accurate and efficient protein synthesis under certain stress conditions. May act as a fidelity factor of the translation reaction, by catalyzing a one-codon backward translocation of tRNAs on improperly translocated ribosomes. Back-translocation proceeds from a post-translocation (POST) complex to a pre-translocation (PRE) complex, thus giving elongation factor G a second chance to translocate the tRNAs correctly. Binds to ribosomes in a GTP-dependent manner. This Psychrobacter cryohalolentis (strain ATCC BAA-1226 / DSM 17306 / VKM B-2378 / K5) protein is Elongation factor 4.